The primary structure comprises 200 residues: MRIVLVGPPGAGKGTQATRLAETLHIPHISTGDLFRANISQQTELGKLAKSYMDAGNLVPDEVTIAMDRTAWSSPTPRAFLLDGFPRNVSQAEALDELLETEDMKLDAVLDLEAPEDEVVKRIAGRRVCRNDSAHVFHVTYTPPKKEGVCDVCGGELYQRDDDSEETVRKRLEVYHTQTEPIIDYYKSQGLVATIAATGP.

10-15 (GAGKGT) is an ATP binding site. Residues 30–59 (STGDLFRANISQQTELGKLAKSYMDAGNLV) are NMP. AMP contacts are provided by residues Thr-31, Arg-36, 57–59 (NLV), 84–87 (GFPR), and Gln-91. An LID region spans residues 125–163 (GRRVCRNDSAHVFHVTYTPPKKEGVCDVCGGELYQRDDD). Residues Arg-126 and 136–137 (VF) contribute to the ATP site. Residues Arg-160 and Arg-171 each contribute to the AMP site.

The protein belongs to the adenylate kinase family. In terms of assembly, monomer.

The protein resides in the cytoplasm. It catalyses the reaction AMP + ATP = 2 ADP. It functions in the pathway purine metabolism; AMP biosynthesis via salvage pathway; AMP from ADP: step 1/1. Functionally, catalyzes the reversible transfer of the terminal phosphate group between ATP and AMP. Plays an important role in cellular energy homeostasis and in adenine nucleotide metabolism. This Streptomyces lividans protein is Adenylate kinase.